The sequence spans 121 residues: UPF0145 protein SGR_4080 (121 aa).

It belongs to the UPF0145 family.

The protein is UPF0145 protein SGR_4080 of Streptomyces griseus subsp. griseus (strain JCM 4626 / CBS 651.72 / NBRC 13350 / KCC S-0626 / ISP 5235).